The sequence spans 146 residues: Snaclec coagulation factor X-activating enzyme light chain 1 (146 aa).

An N-terminal signal peptide occupies residues 1–23 (MGRFISVSFGCLVVFLSLSGTEA). Cysteine 27 and cysteine 38 form a disulfide bridge. One can recognise a C-type lectin domain in the interval 34 to 145 (YEQHCYKGFN…CNFIAPVVCK (112 aa)). Residue asparagine 47 is glycosylated (N-linked (GlcNAc...) (complex) asparagine). 2 cysteine pairs are disulfide-bonded: cysteine 55-cysteine 144 and cysteine 121-cysteine 136.

The protein belongs to the snaclec family. Heterotrimer; disulfide-linked. The heterotrimer consists of 1 heavy chain (a metalloproteinase) and 2 light chains: LC1 and LC2. In terms of processing, N-glycosylated; probably required for conformation. Removal of easily accessible sugars does not change its functional capacity, but removal of the core sugars with N-glycanase causes a virtually complete loss of enzyme activity, apparently as a result of major conformational changes in the molecule. Not O-glycosylated. In terms of tissue distribution, expressed by the venom gland.

Its subcellular location is the secreted. Functionally, regulatory subunit of the blood coagulation factor X- and IX-activating enzyme. The enzyme activates coagulation factor X (F10) by cleaving the Arg-Ile bond and is also able to activate coagulation factor IX (F9) and protein S (PROS1) by specific cleavage of Arg-Ile and Arg-Val bonds. May serve as an exosite by which the enzyme recognizes and binds to the Gla domain of factor X (F10) and factor IX (F9) in a calcium-dependent manner. This is Snaclec coagulation factor X-activating enzyme light chain 1 (LC1) from Daboia siamensis (Eastern Russel's viper).